The sequence spans 375 residues: tRNA-specific 2-thiouridylase MnmA (375 aa).

ATP contacts are provided by residues 18 to 25 (GMSGGVDS) and methionine 44. The tract at residues 104–106 (NPD) is interaction with target base in tRNA. Cysteine 109 acts as the Nucleophile in catalysis. Cysteine 109 and cysteine 206 are disulfide-bonded. Glycine 134 contributes to the ATP binding site. The interval 156–158 (KDQ) is interaction with tRNA. The active-site Cysteine persulfide intermediate is cysteine 206. Positions 318–319 (RY) are interaction with tRNA.

This sequence belongs to the MnmA/TRMU family.

The protein localises to the cytoplasm. It carries out the reaction S-sulfanyl-L-cysteinyl-[protein] + uridine(34) in tRNA + AH2 + ATP = 2-thiouridine(34) in tRNA + L-cysteinyl-[protein] + A + AMP + diphosphate + H(+). Functionally, catalyzes the 2-thiolation of uridine at the wobble position (U34) of tRNA, leading to the formation of s(2)U34. The protein is tRNA-specific 2-thiouridylase MnmA of Colwellia psychrerythraea (strain 34H / ATCC BAA-681) (Vibrio psychroerythus).